Here is a 328-residue protein sequence, read N- to C-terminus: Lipoyl synthase (328 aa).

[4Fe-4S] cluster contacts are provided by C56, C61, C67, C82, C86, C89, and S298. Residues 68-287 (WEDREATFLI…KEEAEEIGFS (220 aa)) enclose the Radical SAM core domain.

The protein belongs to the radical SAM superfamily. Lipoyl synthase family. The cofactor is [4Fe-4S] cluster.

The protein resides in the cytoplasm. The enzyme catalyses [[Fe-S] cluster scaffold protein carrying a second [4Fe-4S](2+) cluster] + N(6)-octanoyl-L-lysyl-[protein] + 2 oxidized [2Fe-2S]-[ferredoxin] + 2 S-adenosyl-L-methionine + 4 H(+) = [[Fe-S] cluster scaffold protein] + N(6)-[(R)-dihydrolipoyl]-L-lysyl-[protein] + 4 Fe(3+) + 2 hydrogen sulfide + 2 5'-deoxyadenosine + 2 L-methionine + 2 reduced [2Fe-2S]-[ferredoxin]. Its pathway is protein modification; protein lipoylation via endogenous pathway; protein N(6)-(lipoyl)lysine from octanoyl-[acyl-carrier-protein]: step 2/2. Catalyzes the radical-mediated insertion of two sulfur atoms into the C-6 and C-8 positions of the octanoyl moiety bound to the lipoyl domains of lipoate-dependent enzymes, thereby converting the octanoylated domains into lipoylated derivatives. In Streptomyces avermitilis (strain ATCC 31267 / DSM 46492 / JCM 5070 / NBRC 14893 / NCIMB 12804 / NRRL 8165 / MA-4680), this protein is Lipoyl synthase.